The chain runs to 378 residues: MLPLSIKDDEYKPPRLNLFRKMSGWFRSILADKTSRNLFFFLCLNLSFAFVELLYGVWSNSLGLISDSFHMFFDCTALLAGLAASVISKWRSNDAFSYGYVRAEVLAGFVNGLFLIFTAFFIFSEGVERALEPPDVHHERLLPVSILGFIVNLIGIFVFQHGGHGHSHGSGHEHSHSLFNGGLSHGHSHRGHGHSHEHKHGHTHDHGHSHGLSHGQDYCHDDHCLEGMTGSSKQILQGVFLHIVADTLGSIGVIISAILMQNYGLMIADPICSMLIALLIGVSIVPLLKESIGILMQRTPPSLENALPQCYQRVQQLQGVYSLHDPHFWTLCTDVYIGTLKLLVAPDADGRWILSQTHNIFTQAGVRQLYIQIDVAAM.

Over 1–37 (MLPLSIKDDEYKPPRLNLFRKMSGWFRSILADKTSRN) the chain is Cytoplasmic. Residues 38–58 (LFFFLCLNLSFAFVELLYGVW) traverse the membrane as a helical segment. Residues 59–67 (SNSLGLISD) are Lumenal-facing. The helical transmembrane segment at 68–88 (SFHMFFDCTALLAGLAASVIS) threads the bilayer. The Cytoplasmic portion of the chain corresponds to 89–102 (KWRSNDAFSYGYVR). A helical transmembrane segment spans residues 103–123 (AEVLAGFVNGLFLIFTAFFIF). The Lumenal segment spans residues 124-140 (SEGVERALEPPDVHHER). Residues 141 to 161 (LLPVSILGFIVNLIGIFVFQH) traverse the membrane as a helical segment. Residues 161–223 (HGGHGHSHGS…HGQDYCHDDH (63 aa)) form a his-rich loop region. At 162 to 238 (GGHGHSHGSG…TGSSKQILQG (77 aa)) the chain is on the cytoplasmic side. Residues 185–214 (HGHSHRGHGHSHEHKHGHTHDHGHSHGLSH) are disordered. The segment covering 186-211 (GHSHRGHGHSHEHKHGHTHDHGHSHG) has biased composition (basic residues). A helical transmembrane segment spans residues 239-259 (VFLHIVADTLGSIGVIISAIL). Over 260 to 264 (MQNYG) the chain is Lumenal. Residues 265 to 285 (LMIADPICSMLIALLIGVSIV) form a helical membrane-spanning segment. The Cytoplasmic portion of the chain corresponds to 286-378 (PLLKESIGIL…LYIQIDVAAM (93 aa)).

The protein belongs to the cation diffusion facilitator (CDF) transporter (TC 2.A.4) family. SLC30A subfamily. As to quaternary structure, homooligomer.

It is found in the golgi apparatus membrane. It localises to the cytoplasmic vesicle. The protein resides in the golgi apparatus. The protein localises to the trans-Golgi network. Its subcellular location is the sarcoplasmic reticulum. It is found in the mitochondrion. The enzyme catalyses Zn(2+)(in) = Zn(2+)(out). Zinc ion transporter mediating zinc entry from the cytosol into the lumen of organelles along the secretory pathway. By contributing to zinc ion homeostasis within the early secretory pathway, regulates the activation and folding of enzymes like alkaline phosphatases. In Gallus gallus (Chicken), this protein is Zinc transporter 7 (SLC30A7).